A 175-amino-acid chain; its full sequence is MTLLYQVGLLLLVAATYKVSAECCTPGATSDFCTVFSMLSTMEQNEVMNFIGENCDGDAEVALQKMEKRKPNFMRYGRSAAVKSLGKKAGSDPNFLRFGRSQPNFLRFGKASGDPNFLRFGRSDPNFLRFGKAAADPNFLRFGKRSADPNFLRFGRSFDNFDRESRKPNFLRFGK.

The signal sequence occupies residues 1-21 (MTLLYQVGLLLLVAATYKVSA). Positions 22 to 68 (ECCTPGATSDFCTVFSMLSTMEQNEVMNFIGENCDGDAEVALQKMEK) are excised as a propeptide. Tyrosine amide is present on tyrosine 76. A propeptide spanning residues 79-86 (SAAVKSLG) is cleaved from the precursor. Phenylalanine amide occurs at positions 98, 108, 120, 130, 142, and 154. Residues 157–165 (SFDNFDRES) constitute a propeptide that is removed on maturation. At phenylalanine 173 the chain carries Phenylalanine amide.

This sequence belongs to the FARP (FMRFamide related peptide) family. May be processed by convertase egl-3. As to expression, each flp gene is expressed in a distinct set of neurons. Flp-1 is expressed in the AVA interneurons, the M5 cholinergic pharyngeal motoneurons, and the AIA, AIY, AVE, AVK, RIG and RMG neurons.

It localises to the secreted. Functionally, together with flp-18, plays a homeostatic role by acting on the GABAergic neural transmission at neuromuscular junctions to prevent overexcitation of the locomotor circuit. In terms of biological role, inhibits the activity of dissected pharyngeal myogenic muscle system. Its function is as follows. DPNFLRF-amide: Inhibits the activity of dissected pharyngeal myogenic muscle system. Acts as a ligand for the npr-22 receptor in vitro. This chain is FMRFamide-like neuropeptides 1 (flp-1), found in Caenorhabditis elegans.